A 258-amino-acid polypeptide reads, in one-letter code: Phosphate import ATP-binding protein PstB (258 aa).

Positions 5-247 (LDLKDVNIYY…EKIFSNPTQK (243 aa)) constitute an ABC transporter domain. 37-44 (GPSGCGKS) is a binding site for ATP.

Belongs to the ABC transporter superfamily. Phosphate importer (TC 3.A.1.7) family. In terms of assembly, the complex is composed of two ATP-binding proteins (PstB), two transmembrane proteins (PstC and PstA) and a solute-binding protein (PstS).

It localises to the cell membrane. It carries out the reaction phosphate(out) + ATP + H2O = ADP + 2 phosphate(in) + H(+). Its function is as follows. Part of the ABC transporter complex PstSACB involved in phosphate import. Responsible for energy coupling to the transport system. In Rhodococcus jostii (strain RHA1), this protein is Phosphate import ATP-binding protein PstB.